The chain runs to 318 residues: Probable carboxylesterase 1 (318 aa).

Position 1 is an N-acetylmethionine (methionine 1). The short motif at 79–81 is the Involved in the stabilization of the negatively charged intermediate by the formation of the oxyanion hole element; that stretch reads HGG. Active-site residues include serine 163, aspartate 258, and histidine 290.

The protein belongs to the 'GDXG' lipolytic enzyme family. Expressed in roots, stems, flowers and siliques.

It carries out the reaction a carboxylic ester + H2O = an alcohol + a carboxylate + H(+). In terms of biological role, carboxylesterase acting on esters with varying acyl chain length. The protein is Probable carboxylesterase 1 (CXE1) of Arabidopsis thaliana (Mouse-ear cress).